Here is a 103-residue protein sequence, read N- to C-terminus: Protamine-2 (103 aa).

Residues 1-103 (MVRYRMRSLS…RTRRRRCRRY (103 aa)) are disordered. 2 positions are modified to phosphoserine: Ser8 and Ser10. Residues 8-17 (SLSERPHEVH) are compositionally biased toward basic and acidic residues. Low complexity predominate over residues 23–35 (GQEQGHNGQEEQG). Ser37 bears the Phosphoserine mark. The span at 39–48 (EHVEVYERTH) shows a compositional bias: basic and acidic residues. Basic residues predominate over residues 51–103 (YSHHRRRRCSRRRLYRIHRRRHRSCRRRRRRSCRHRRRHRRGCRTRRRRCRRY).

It belongs to the protamine P2 family. Interacts with TDRP. Post-translationally, proteolytic processing into mature chains is required for histone eviction during spermatogenesis. Transition proteins (TNP1 and TNP2) are required for processing. In terms of tissue distribution, testis.

Its subcellular location is the nucleus. It is found in the chromosome. Functionally, protamines substitute for histones in the chromatin of sperm during the haploid phase of spermatogenesis. They compact sperm DNA into a highly condensed, stable and inactive complex. The protein is Protamine-2 (PRM2) of Semnopithecus entellus (Northern plains gray langur).